Consider the following 457-residue polypeptide: UDP-N-acetylmuramate--L-alanine ligase (457 aa).

109–115 serves as a coordination point for ATP; sequence GTDGKTT.

The protein belongs to the MurCDEF family.

It is found in the cytoplasm. It carries out the reaction UDP-N-acetyl-alpha-D-muramate + L-alanine + ATP = UDP-N-acetyl-alpha-D-muramoyl-L-alanine + ADP + phosphate + H(+). The protein operates within cell wall biogenesis; peptidoglycan biosynthesis. Cell wall formation. The chain is UDP-N-acetylmuramate--L-alanine ligase (murC) from Thermotoga maritima (strain ATCC 43589 / DSM 3109 / JCM 10099 / NBRC 100826 / MSB8).